Consider the following 671-residue polypeptide: Anti-sigma-I factor RsgI2 (671 aa).

The Cytoplasmic segment spans residues 1 to 57 (MSHYTGIILKLESDRAIVLTDGLDFMELKLKPGMQRGQHVIFDESDLYSAGLITRYK). The RsgI N-terminal anti-sigma domain occupies 4–51 (YTGIILKLESDRAIVLTDGLDFMELKLKPGMQRGQHVIFDESDLYSAG). A helical membrane pass occupies residues 58–78 (SIIMPFSAFAAAAAVFLVILF). Over 79–671 (SLRFVSISQE…SGTLYWGIEP (593 aa)) the chain is Extracellular. Disordered regions lie at residues 290 to 323 (TEAQ…IPHT) and 359 to 505 (PVPV…APTE). Residues 359-379 (PVPVSTPKPVSTPAYSSTPTP) are compositionally biased toward low complexity. A compositionally biased stretch (pro residues) spans 380–400 (ESTPVPVSTPKPASTPTPAST). A compositionally biased stretch (low complexity) spans 401–425 (PKPVSTPTHVSTPKPISTPTSTPRP). Positions 426 to 446 (ASTPKPTSTPTPESTPKPTST) are enriched in pro residues. Over residues 447–491 (PAPVSTPTSTPIPTYTSTPASTPIPAYTSTPTSIPTLTPATSPAP) the composition is skewed to low complexity. The span at 492 to 502 (TSSPTPIPSPA) shows a compositional bias: pro residues. A CBM3 domain is found at 508–671 (LLTKIELQAY…SGTLYWGIEP (164 aa)). Ca(2+) is bound by residues T554, D556, D637, S640, and D641.

As to quaternary structure, interacts (via RsgI N-terminal anti-sigma domain) with SigI2.

The protein resides in the cell membrane. In terms of biological role, anti-sigma factor for SigI2. Negatively regulates SigI2 activity through direct interaction. Binding of the polysaccharide substrate to the extracellular C-terminal sensing domain of RsgI2 may induce a conformational change in its N-terminal cytoplasmic region, leading to the release and activation of SigI2. This Acetivibrio thermocellus (strain ATCC 27405 / DSM 1237 / JCM 9322 / NBRC 103400 / NCIMB 10682 / NRRL B-4536 / VPI 7372) (Clostridium thermocellum) protein is Anti-sigma-I factor RsgI2.